Here is a 319-residue protein sequence, read N- to C-terminus: Probable arabinan endo-1,5-alpha-L-arabinosidase C (319 aa).

An N-terminal signal peptide occupies residues 1-16 (MFVYTLIFLFLAAANA). Aspartate 31 (proton acceptor) is an active-site residue. Asparagine 190 is a glycosylation site (N-linked (GlcNAc...) asparagine). Catalysis depends on glutamate 198, which acts as the Proton donor. A glycan (N-linked (GlcNAc...) asparagine) is linked at asparagine 222.

This sequence belongs to the glycosyl hydrolase 43 family.

The protein localises to the secreted. It carries out the reaction Endohydrolysis of (1-&gt;5)-alpha-arabinofuranosidic linkages in (1-&gt;5)-arabinans.. It functions in the pathway glycan metabolism; L-arabinan degradation. Its function is as follows. Endo-1,5-alpha-L-arabinanase involved in degradation of pectin. Its preferred substrate is linear 1,5-alpha-L-arabinan. This is Probable arabinan endo-1,5-alpha-L-arabinosidase C (abnC) from Aspergillus clavatus (strain ATCC 1007 / CBS 513.65 / DSM 816 / NCTC 3887 / NRRL 1 / QM 1276 / 107).